The sequence spans 418 residues: Alpha-1-antitrypsin (418 aa).

An N-terminal signal peptide occupies residues 1–24; sequence MPSSVSWGILLLAGLCCLVPVSLA. A Phosphoserine modification is found at S38. Residues N70, N107, and N271 are each glycosylated (N-linked (GlcNAc...) asparagine). The interval 373–392 is RCL; the sequence is GAMFLEAIPMSIPPEVKFNK. Phosphoserine is present on S383.

This sequence belongs to the serpin family. As to quaternary structure, interacts with CELA2A. Interacts with ERGIC3 and LMAN1/ERGIC53. Interacts with PRSS1/Trypsin. In terms of tissue distribution, plasma.

The protein resides in the secreted. Inhibitor of serine proteases. Its primary target is elastase, but it also has a moderate affinity for plasmin and thrombin. Inhibits trypsin, chymotrypsin and plasminogen activator. The protein is Alpha-1-antitrypsin (SERPINA1) of Pongo abelii (Sumatran orangutan).